Reading from the N-terminus, the 133-residue chain is MWNEFKKFAFKGNVIDLAVGVVIGAAFGKIVSSLVKDIITPLLGMVLGGVNFTDLKLTFGKSSIMYGNFIQTIFDFLIIAAAIFMFVKVFNKLTSKREEEEKKEELPEPTKEEEILGEIRDLLKQQNSSKDRA.

A run of 2 helical transmembrane segments spans residues 14–34 (VIDL…VSSL) and 67–87 (GNFI…FMFV).

Belongs to the MscL family. As to quaternary structure, homopentamer.

It localises to the cell membrane. In terms of biological role, channel that opens in response to stretch forces in the membrane lipid bilayer. May participate in the regulation of osmotic pressure changes within the cell. In Bacillus mycoides (strain KBAB4) (Bacillus weihenstephanensis), this protein is Large-conductance mechanosensitive channel.